The following is a 666-amino-acid chain: Probable potassium transport system protein Kup (666 aa).

The next 12 helical transmembrane spans lie at 16–36 (GFIIALGIVYGDIGTSPLYTM), 58–78 (ISLIIWTLTLITTIKYVLIAL), 100–120 (PWLIIPAMIGGATLLSDGALT), 141–161 (IYQNQTNVIITTLVILIVLFG), 165–185 (FGTGFIGKIFGPVMFIWFSFL), 221–241 (IFILGSIFLATTGAEALYSDL), 253–273 (WPFVKMCIVLSYCGQAAWILA), 294–314 (VYLVSLATLAAIIASQALISG), 343–363 (LYIPVINWILFAVTSCTVLAF), 373–393 (YGLAITITMLMTTILLKYYLI), 399–419 (PILAHLVMAFFALVEFIFFLA), and 424–444 (FMHGGYAVVILALAIVFVMFI).

The protein belongs to the HAK/KUP transporter (TC 2.A.72) family.

The protein resides in the cell membrane. The catalysed reaction is K(+)(in) + H(+)(in) = K(+)(out) + H(+)(out). Its function is as follows. Transport of potassium into the cell. Likely operates as a K(+):H(+) symporter. The chain is Probable potassium transport system protein Kup from Streptococcus pyogenes serotype M49 (strain NZ131).